Reading from the N-terminus, the 238-residue chain is 6-phosphogluconolactonase (238 aa).

It belongs to the glucosamine/galactosamine-6-phosphate isomerase family. 6-phosphogluconolactonase subfamily.

It carries out the reaction 6-phospho-D-glucono-1,5-lactone + H2O = 6-phospho-D-gluconate + H(+). It participates in carbohydrate degradation; pentose phosphate pathway; D-ribulose 5-phosphate from D-glucose 6-phosphate (oxidative stage): step 2/3. Hydrolysis of 6-phosphogluconolactone to 6-phosphogluconate. This is 6-phosphogluconolactonase (pgl) from Pseudomonas aeruginosa (strain ATCC 15692 / DSM 22644 / CIP 104116 / JCM 14847 / LMG 12228 / 1C / PRS 101 / PAO1).